A 146-amino-acid chain; its full sequence is Large ribosomal subunit protein uL15 (146 aa).

Residues 1–13 (MKLHELHSAEGSR) are compositionally biased toward basic and acidic residues. Positions 1 to 55 (MKLHELHSAEGSRRNRKRVGRGTSSGYGKTSGRGQKGQLARQGGHTRLGFEGGQM) are disordered. The span at 23–35 (TSSGYGKTSGRGQ) shows a compositional bias: gly residues.

It belongs to the universal ribosomal protein uL15 family. In terms of assembly, part of the 50S ribosomal subunit.

Its function is as follows. Binds to the 23S rRNA. In Lactobacillus acidophilus (strain ATCC 700396 / NCK56 / N2 / NCFM), this protein is Large ribosomal subunit protein uL15.